Consider the following 1364-residue polypeptide: MLSFVDTRTLLLLAVTSCLATCQSLQEATARKGPSGDRGPRGERGPPGPPGRDGDDGIPGPPGPPGPPGPPGLGGNFAAQFDAKGGGPGPMGLMGPRGPPGASGAPGPQGFQGPPGEPGEPGQTGPAGARGPPGPPGKAGEDGHPGKPGRPGERGVVGPQGARGFPGTPGLPGFKGIRGHNGLDGLKGQPGAPGVKGEPGAPGENGTPGQTGARGLPGERGRVGAPGPAGARGSDGSVGPVGPAGPIGSAGPPGFPGAPGPKGELGPVGNPGPAGPAGPRGEVGLPGLSGPVGPPGNPGANGLPGAKGAAGLPGVAGAPGLPGPRGIPGPVGAAGATGARGLVGEPGPAGSKGESGNKGEPGAVGQPGPPGPSGEEGKRGSTGEIGPAGPPGPPGLRGNPGSRGLPGADGRAGVMGPAGSRGATGPAGVRGPNGDSGRPGEPGLMGPRGFPGSPGNIGPAGKEGPVGLPGIDGRPGPIGPAGARGEPGNIGFPGPKGPSGDPGKAGEKGHAGLAGARGAPGPDGNNGAQGPPGLQGVQGGKGEQGPAGPPGFQGLPGPAGTAGEAGKPGERGIPGEFGLPGPAGARGERGPPGESGAAGPTGPIGSRGPSGPPGPDGNKGEPGVVGAPGTAGPSGPSGLPGERGAAGIPGGKGEKGETGLRGDIGSPGRDGARGAPGAIGAPGPAGANGDRGEAGPAGPAGPAGPRGSPGERGEVGPAGPNGFAGPAGAAGQPGAKGERGTKGPKGENGPVGPTGPVGAAGPSGPNGPPGPAGSRGDGGPPGATGFPGAAGRTGPPGPSGISGPPGPPGPAGKEGLRGPRGDQGPVGRSGETGASGPPGFVGEKGPSGEPGTAGPPGTPGPQGLLGAPGFLGLPGSRGERGLPGVAGSVGEPGPLGIAGPPGARGPPGNVGNPGVNGAPGEAGRDGNPGNDGPPGRDGQPGHKGERGYPGNAGPVGAAGAPGPQGPVGPVGKHGNRGEPGPAGAVGPAGAVGPRGPSGPQGIRGDKGEPGDKGPRGLPGLKGHNGLQGLPGLAGHHGDQGAPGAVGPAGPRGPAGPSGPAGKDGRIGQPGAVGPAGIRGSQGSQGPAGPPGPPGPPGPPGPSGGGYEFGFDGDFYRADQPRSPTSLRPKDYEVDATLKSLNNQIETLLTPEGSRKNPARTCRDLRLSHPEWSSGYYWIDPNQGCTMDAIKVYCDFSTGETCIRAQPEDIPVKNWYRNSKAKKHVWVGETINGGTQFEYNVEGVTTKEMATQLAFMRLLANHASQNITYHCKNSIAYMDEETGNLKKAVILQGSNDVELVAEGNSRFTYTVLVDGCSKKTNEWQKTIIEYKTNKPSRLPILDIAPLDIGGADQEIRLNIGPVCFK.

Residues methionine 1–cysteine 22 form the signal peptide. Glutamine 23 bears the Pyrrolidone carboxylic acid mark. The propeptide at glutamine 23–alanine 79 is N-terminal propeptide. A disordered region spans residues glutamine 26–proline 1128. A compositionally biased stretch (basic and acidic residues) spans proline 34–arginine 44. Residues proline 59–proline 71 show a composition bias toward pro residues. Glutamine 80 carries the post-translational modification Pyrrolidone carboxylic acid. Residue lysine 84 is modified to Allysine. Over residues leucine 93–arginine 130 the composition is skewed to low complexity. Residues proline 100, proline 106, proline 115, proline 118, proline 121, proline 133, proline 136, proline 145, proline 151, proline 166, proline 169, and proline 172 each carry the 4-hydroxyproline modification. Over residues alanine 139 to glutamate 153 the composition is skewed to basic and acidic residues. Lysine 175 carries the post-translational modification 5-hydroxylysine; alternate. A glycan (O-linked (Gal...) hydroxylysine; alternate) is linked at lysine 175. 4-hydroxyproline occurs at positions 190 and 193. 5-hydroxylysine is present on lysine 196. A 4-hydroxyproline mark is found at proline 199, proline 202, proline 208, proline 217, proline 226, proline 253, proline 256, and proline 259. Residues valine 223 to proline 252 show a composition bias toward low complexity. A 5-hydroxylysine modification is found at lysine 262. 4-hydroxyproline occurs at positions 271, 286, 295, and 304. A compositionally biased stretch (low complexity) spans alanine 277–proline 291. The span at proline 298 to proline 319 shows a compositional bias: low complexity. A 5-hydroxylysine modification is found at lysine 307. 5 positions are modified to 4-hydroxyproline: proline 313, proline 319, proline 322, proline 328, and proline 346. The segment covering proline 328–valine 343 has biased composition (low complexity). 5-hydroxylysine is present on lysine 352. 9 positions are modified to 4-hydroxyproline: proline 361, proline 367, proline 370, proline 391, proline 394, proline 400, proline 406, proline 439, and proline 442. Positions leucine 396 to proline 406 are enriched in low complexity. 2 stretches are compositionally biased toward low complexity: residues leucine 468–proline 487 and alanine 511–glutamine 535. Positions glycine 536–glycine 545 are enriched in gly residues. Composition is skewed to low complexity over residues proline 592–proline 609, glutamate 621–arginine 643, serine 666–asparagine 688, and valine 715–alanine 735. Over residues lysine 736–lysine 745 the composition is skewed to basic and acidic residues. Positions asparagine 748 to serine 763 are enriched in low complexity. The span at glycine 773–glycine 782 shows a compositional bias: gly residues. Composition is skewed to low complexity over residues alanine 783–threonine 793, proline 861–proline 874, glutamate 891–asparagine 930, tyrosine 948–proline 961, and glutamate 978–proline 999. Positions arginine 1003 to proline 1014 are enriched in basic and acidic residues. Residues alanine 1087 to proline 1101 show a composition bias toward pro residues. The propeptide at aspartate 1118–lysine 1364 is C-terminal propeptide. The region spanning tyrosine 1131–lysine 1364 is the Fibrillar collagen NC1 domain. Intrachain disulfides connect cysteine 1161–cysteine 1193, cysteine 1201–cysteine 1362, and cysteine 1270–cysteine 1315. Positions 1179, 1181, 1182, 1184, and 1187 each coordinate Ca(2+). Residue asparagine 1265 is glycosylated (N-linked (GlcNAc...) asparagine).

It belongs to the fibrillar collagen family. In terms of assembly, trimers of one alpha 2(I) and two alpha 1(I) chains. Interacts (via C-terminus) with TMEM131 (via PapD-L domain); the interaction is direct and is involved in assembly and TRAPPIII ER-to-Golgi transport complex-dependent secretion of collagen. Prolines at the third position of the tripeptide repeating unit (G-X-Y) are hydroxylated in some or all of the chains. In terms of tissue distribution, forms the fibrils of tendon, ligaments and bones. In bones the fibrils are mineralized with calcium hydroxyapatite.

It localises to the secreted. Its subcellular location is the extracellular space. The protein resides in the extracellular matrix. In terms of biological role, type I collagen is a member of group I collagen (fibrillar forming collagen). This chain is Collagen alpha-2(I) chain (COL1A2), found in Bos taurus (Bovine).